Reading from the N-terminus, the 334-residue chain is Short-chain dehydrogenase/reductase (334 aa).

NADP(+)-binding residues include Leu-44, Lys-68, Asp-93, Asn-120, and Lys-152. Catalysis depends on proton donor residues Ser-176 and Tyr-205. Residues Tyr-205, Lys-209, and Asn-239 each contribute to the NADP(+) site. Lys-209 serves as the catalytic Lowers pKa of active site Tyr.

It belongs to the short-chain dehydrogenases/reductases (SDR) family.

Its pathway is mycotoxin biosynthesis. In terms of biological role, short-chain dehydrogenase/reductase; part of the 2 gene clusters that mediate the biosynthesis of fusicoccins, diterpene glucosides that display phytohormone-like activity and function as potent activators of plasma membrane H(+)-ATPases in plants by modifying 14-3-3 proteins and cause the plant disease constriction canker. The first step in the pathway is performed by the fusicoccadiene synthase PaFS that possesses both prenyl transferase and terpene cyclase activity, converting isopentenyl diphosphate and dimethylallyl diphosphate into geranylgeranyl diphosphate (GGDP) and successively converting GGDP into fusicocca-2,10(14)-diene, a precursor for fusicoccin H. The second step is the oxidation at the C-8 position by the cytochrome P450 monooxygenase PaP450-2 to yield fusicocca-2,10(14)-diene-8-beta-ol. The cytochrome P450 monooxygenase PaP450-1 then catalyzes the hydroxylation at the C-16 position to produce fusicocca-2,10(14)-diene-8-beta,16-diol. The dioxygenase fc-dox then catalyzes the 16-oxydation of fusicocca-2,10(14)-diene-8-beta,16-diol to yield an aldehyde (8-beta-hydroxyfusicocca-1,10(14)-dien-16-al). The short-chain dehydrogenase/reductase fc-sdr catalyzes the reduction of the aldehyde to yield fusicocca-1,10(14)-diene-8-beta,16-diol. The next step is the hydroxylation at C-9 performed by the cytochrome P450 monooxygenase PaP450-3 that leads to fusicoccin H aglycon which is glycosylated to fusicoccin H by the O-glycosyltransferase PaGT. Hydroxylation at C-12 by the cytochrome P450 monooxygenase PaP450-4 leads then to the production of fusicoccin Q and is followed by methylation by the O-methyltransferase PaMT to yield fusicoccin P. Fusicoccin P is further converted to fusicoccin J via prenylation by the O-glucose prenyltransferase PaPT. Cytochrome P450 monooxygenase PaP450-5 then performs hydroxylation at C-19 to yield dideacetyl-fusicoccin A which is acetylated to 3'-O-deacetyl-fusicoccin A by the O-acetyltransferase PaAT-2. Finally, a another acetylation by the O-acetyltransferase PaAT-1 yields fusicoccin A. This is Short-chain dehydrogenase/reductase from Phomopsis amygdali (Fusicoccum amygdali).